The sequence spans 31 residues: Cytochrome b6-f complex subunit 6 (31 aa).

The helical transmembrane segment at 4 to 24 (VISYLSLLFISFLFALTLFIV) threads the bilayer.

Belongs to the PetL family. In terms of assembly, the 4 large subunits of the cytochrome b6-f complex are cytochrome b6, subunit IV (17 kDa polypeptide, PetD), cytochrome f and the Rieske protein, while the 4 small subunits are PetG, PetL, PetM and PetN. The complex functions as a dimer.

The protein resides in the plastid. Its subcellular location is the chloroplast thylakoid membrane. Functionally, component of the cytochrome b6-f complex, which mediates electron transfer between photosystem II (PSII) and photosystem I (PSI), cyclic electron flow around PSI, and state transitions. PetL is important for photoautotrophic growth as well as for electron transfer efficiency and stability of the cytochrome b6-f complex. The sequence is that of Cytochrome b6-f complex subunit 6 from Chara vulgaris (Common stonewort).